The sequence spans 21 residues: Putative sperm adenylate cyclase (21 aa).

The catalysed reaction is ATP = 3',5'-cyclic AMP + diphosphate. The polypeptide is Putative sperm adenylate cyclase (Mus musculus (Mouse)).